The sequence spans 169 residues: Peptide deformylase 1 (169 aa).

Residues Cys-92 and His-134 each coordinate Fe cation. The active site involves Glu-135. His-138 provides a ligand contact to Fe cation.

This sequence belongs to the polypeptide deformylase family. The cofactor is Fe(2+).

It catalyses the reaction N-terminal N-formyl-L-methionyl-[peptide] + H2O = N-terminal L-methionyl-[peptide] + formate. In terms of biological role, removes the formyl group from the N-terminal Met of newly synthesized proteins. Requires at least a dipeptide for an efficient rate of reaction. N-terminal L-methionine is a prerequisite for activity but the enzyme has broad specificity at other positions. This chain is Peptide deformylase 1, found in Ralstonia nicotianae (strain ATCC BAA-1114 / GMI1000) (Ralstonia solanacearum).